Here is a 685-residue protein sequence, read N- to C-terminus: Eukaryotic peptide chain release factor GTP-binding subunit (685 aa).

Disordered regions lie at residues 1-34 (MSDSNQGNNQQNYQQYSQNGNQQQGNNRYQGYQA), 63-99 (YNPDAGYQQQYNPQGGYQQYNPQGGYQQQFNPQGGRG), and 112-234 (GYQA…NVTS). An N-acetylserine modification is found at serine 2. The tract at residues 2–239 (SDSNQGNNQQ…ANVTSADALI (238 aa)) is interaction with PAB1. Residues 5–135 (NQGNNQQNYQ…LNDFQKQQKQ (131 aa)) form a prion domain (PrD) region. Positions 117-129 (FQPQSQGMSLNDF) are enriched in polar residues. Positions 139-249 (KPKKTLKLVS…KEQEEEVDDE (111 aa)) are charged. A compositionally biased stretch (basic and acidic residues) spans 166 to 222 (AESDKKEEEKSAETKEPTKEPTKVEEPVKKEEKPVQTEEKTEEKSELPKVEDLKISE). The segment covering 223–234 (STHNTNNANVTS) has biased composition (polar residues). Positions 258–484 (KDHVSLIFMG…YLDTMNHVDR (227 aa)) constitute a tr-type G domain. The G1 stretch occupies residues 267–274 (GHVDAGKS). 267-274 (GHVDAGKS) is a binding site for GTP. The segment at 323 to 327 (GKTIE) is G2. The G3 stretch occupies residues 344–347 (DAPG). GTP is bound by residues 406–409 (NKMD) and 449–450 (GY). The segment at 406-409 (NKMD) is G4. The interval 448-450 (SGY) is G5. Serine 571 carries the post-translational modification Phosphoserine.

This sequence belongs to the TRAFAC class translation factor GTPase superfamily. Classic translation factor GTPase family. ERF3 subfamily. As to quaternary structure, heterodimer of two subunits, one of which binds GTP. Interacts with polyadenylate-binding protein PAB1, and TPA1.

It is found in the cytoplasm. It carries out the reaction GTP + H2O = GDP + phosphate + H(+). In terms of biological role, GTPase component of the eRF1-eRF3-GTP ternary complex, a ternary complex that mediates translation termination in response to the termination codons UAA, UAG and UGA. SUP35/eRF3 mediates SUP45/eRF1 delivery to stop codons: The eRF1-eRF3-GTP complex binds to a stop codon in the ribosomal A-site. GTP hydrolysis by SUP35/eRF3 induces a conformational change that leads to its dissociation, permitting SUP45/eRF1 to accommodate fully in the A-site. Recruited by polyadenylate-binding protein PAB1 to poly(A)-tails of mRNAs. Interaction with PAB1 is also required for regulation of normal mRNA decay through translation termination-coupled poly(A) shortening. The chain is Eukaryotic peptide chain release factor GTP-binding subunit (SUP35) from Saccharomyces cerevisiae (strain ATCC 204508 / S288c) (Baker's yeast).